A 588-amino-acid chain; its full sequence is Aspartate--tRNA ligase (588 aa).

Residue Glu-174 coordinates L-aspartate. The tract at residues 198-201 (QLFK) is aspartate. Arg-220 lines the L-aspartate pocket. ATP contacts are provided by residues 220-222 (RDE) and Gln-229. His-448 contributes to the L-aspartate binding site. Glu-482 contributes to the ATP binding site. Arg-489 provides a ligand contact to L-aspartate. 534–537 (GLDR) provides a ligand contact to ATP.

It belongs to the class-II aminoacyl-tRNA synthetase family. Type 1 subfamily. In terms of assembly, homodimer.

It is found in the cytoplasm. It carries out the reaction tRNA(Asp) + L-aspartate + ATP = L-aspartyl-tRNA(Asp) + AMP + diphosphate. Catalyzes the attachment of L-aspartate to tRNA(Asp) in a two-step reaction: L-aspartate is first activated by ATP to form Asp-AMP and then transferred to the acceptor end of tRNA(Asp). In Exiguobacterium sibiricum (strain DSM 17290 / CCUG 55495 / CIP 109462 / JCM 13490 / 255-15), this protein is Aspartate--tRNA ligase.